The sequence spans 180 residues: Beta-lactoglobulin (180 aa).

Positions M1–A18 are cleaved as a signal peptide. 3 disulfides stabilise this stretch: C84–C178, C124–C137, and C124–C139.

It belongs to the calycin superfamily. Lipocalin family. In terms of assembly, under physiological conditions beta-lactoglobulin exists as an equilibrium mixture of monomeric and dimeric forms. Interaction with LMBR1L is controversial. Post-translationally, alternate disulfide bonds occur in equal amounts. Synthesized in mammary gland and secreted in milk.

Its subcellular location is the secreted. Primary component of whey, it binds retinol and is probably involved in the transport of that molecule. This Bubalus bubalis (Domestic water buffalo) protein is Beta-lactoglobulin (LGB).